A 367-amino-acid chain; its full sequence is Glutamate 5-kinase (367 aa).

ATP is bound at residue lysine 10. Substrate is bound by residues serine 50, aspartate 137, and asparagine 149. ATP is bound by residues threonine 169–aspartate 170 and threonine 211–lysine 217. Residues alanine 275 to glutamate 353 form the PUA domain.

This sequence belongs to the glutamate 5-kinase family.

It is found in the cytoplasm. The catalysed reaction is L-glutamate + ATP = L-glutamyl 5-phosphate + ADP. It participates in amino-acid biosynthesis; L-proline biosynthesis; L-glutamate 5-semialdehyde from L-glutamate: step 1/2. In terms of biological role, catalyzes the transfer of a phosphate group to glutamate to form L-glutamate 5-phosphate. The sequence is that of Glutamate 5-kinase from Salmonella arizonae (strain ATCC BAA-731 / CDC346-86 / RSK2980).